Reading from the N-terminus, the 464-residue chain is Fumarate hydratase class II (464 aa).

Residues 100–102 (SGT), 131–134 (HPND), 141–143 (SSN), and threonine 189 contribute to the substrate site. Histidine 190 functions as the Proton donor/acceptor in the catalytic mechanism. Serine 320 is an active-site residue. Residues serine 321 and 326 to 328 (KVN) contribute to the substrate site.

It belongs to the class-II fumarase/aspartase family. Fumarase subfamily. As to quaternary structure, homotetramer.

The protein resides in the cytoplasm. The enzyme catalyses (S)-malate = fumarate + H2O. It participates in carbohydrate metabolism; tricarboxylic acid cycle; (S)-malate from fumarate: step 1/1. In terms of biological role, involved in the TCA cycle. Catalyzes the stereospecific interconversion of fumarate to L-malate. The polypeptide is Fumarate hydratase class II (Deinococcus radiodurans (strain ATCC 13939 / DSM 20539 / JCM 16871 / CCUG 27074 / LMG 4051 / NBRC 15346 / NCIMB 9279 / VKM B-1422 / R1)).